A 195-amino-acid polypeptide reads, in one-letter code: Transcription factor LBX2 (195 aa).

2 disordered regions span residues 1 to 89 (MNSV…KSRT) and 164 to 195 (PALP…QVDD). The homeobox DNA-binding region spans 84–143 (RRKSRTAFTAQQVLELERRFVFQKYLAPSERDGLAARLGLANAQVVTWFQNRRAKLKRDV). Residues 186-195 (LSDEEIQVDD) are compositionally biased toward acidic residues.

Expressed in the developing urogenital system, eye and brain.

The protein resides in the nucleus. In terms of biological role, transcription factor. This Mus musculus (Mouse) protein is Transcription factor LBX2 (Lbx2).